Consider the following 617-residue polypeptide: Dihydroxy-acid dehydratase (617 aa).

Asp-81 serves as a coordination point for Mg(2+). Cys-122 serves as a coordination point for [2Fe-2S] cluster. Mg(2+)-binding residues include Asp-123 and Lys-124. Lys-124 carries the post-translational modification N6-carboxylysine. Cys-195 contacts [2Fe-2S] cluster. Residue Glu-491 coordinates Mg(2+). Ser-517 acts as the Proton acceptor in catalysis.

The protein belongs to the IlvD/Edd family. Homodimer. [2Fe-2S] cluster serves as cofactor. Mg(2+) is required as a cofactor.

It carries out the reaction (2R)-2,3-dihydroxy-3-methylbutanoate = 3-methyl-2-oxobutanoate + H2O. The catalysed reaction is (2R,3R)-2,3-dihydroxy-3-methylpentanoate = (S)-3-methyl-2-oxopentanoate + H2O. It participates in amino-acid biosynthesis; L-isoleucine biosynthesis; L-isoleucine from 2-oxobutanoate: step 3/4. It functions in the pathway amino-acid biosynthesis; L-valine biosynthesis; L-valine from pyruvate: step 3/4. Functionally, functions in the biosynthesis of branched-chain amino acids. Catalyzes the dehydration of (2R,3R)-2,3-dihydroxy-3-methylpentanoate (2,3-dihydroxy-3-methylvalerate) into 2-oxo-3-methylpentanoate (2-oxo-3-methylvalerate) and of (2R)-2,3-dihydroxy-3-methylbutanoate (2,3-dihydroxyisovalerate) into 2-oxo-3-methylbutanoate (2-oxoisovalerate), the penultimate precursor to L-isoleucine and L-valine, respectively. This chain is Dihydroxy-acid dehydratase, found in Buchnera aphidicola subsp. Acyrthosiphon pisum (strain 5A).